Here is a 511-residue protein sequence, read N- to C-terminus: MLRRYLATSASATASATATASASASASASKNSIKSNFKFHPEYKFKCGLEIHTQLKTKYKLFSLSRTSFNDTPNSHISYFDVGLPGTQPKLNPEALYLALKAAVALNCEVQQMSRFDRKHYFYPDQPMGYQITQNFHPLAKNGYLTFNEFDGVEIATSKDGANDTIRIEKIQLEQDTGKKYGDIIDYNRAGIPLIEVVTKPDFDSIEKVLAFVKKYQLLVRHFDICSGDLETGAIRVDVNVNVNDSPRVEIKNISTTGDIVNAIKYEYNRQVETLTKGGSLEQQTRNWDGIRTNLARSKENAIDYRYFPDSELPQIILSPDIAHDIKTSLPESPDSLLARLTSSPHNLQLAHAKNLITEPELLHYYESFFAIHRKPDADKWVFQELLTAFAKLGKTFDVEIVKPNVFAHLVSMDLNLVSKRLILKHMVQNEVSLDKAIEQLGFKEDQKPTTELAEDICKEIILTNQQIVDRIQSGHAKAVEVLVGNAMKKTRGKFAAQTFRSLFKEQLGIS.

Residues 1–6 (MLRRYL) constitute a mitochondrion transit peptide.

The protein belongs to the GatB/GatE family. GatB subfamily. As to quaternary structure, subunit of the heterotrimeric GatFAB amidotransferase (AdT) complex, composed of A, B and F subunits.

It is found in the mitochondrion. It carries out the reaction L-glutamyl-tRNA(Gln) + L-glutamine + ATP + H2O = L-glutaminyl-tRNA(Gln) + L-glutamate + ADP + phosphate + H(+). Allows the formation of correctly charged Gln-tRNA(Gln) through the transamidation of misacylated Glu-tRNA(Gln) in the mitochondria. The reaction takes place in the presence of glutamine and ATP through an activated gamma-phospho-Glu-tRNA(Gln). In Lodderomyces elongisporus (strain ATCC 11503 / CBS 2605 / JCM 1781 / NBRC 1676 / NRRL YB-4239) (Yeast), this protein is Glutamyl-tRNA(Gln) amidotransferase subunit B, mitochondrial.